Here is a 1914-residue protein sequence, read N- to C-terminus: MSHLKLDTLHVQRSPRGSRRSSRSSGRSSACSSGSISPVPIIPIISISHDGDESESESEIETEPARLFQRRMSIKCTNNLAAIIKEGFLLKHTWSFQRWRRRYFRLKRNMLFYAKDEKCDVFDDIDLSDLCYFECGIKNVNHSFQIITPTRSLVLCAESRREMEDWLGSLKTATAPQRPRGDSFLIEQHDILSNHHHWYATSHARPTYCNVCRDALSGVTSHGLSCEVCKCKVHKRCAAKSIANCKWTTLASVGKDIIEQADGSIIMPHQWMEGNLPVSSMCAVCKKTCGSVLRLQDWRCLWCRATVHVACRPQMAVACPIGPAKLSVVPPTSVHSISTDDAWDVASPKGNFSPLLVFVNSKSGDNQGVKFLRRFKQLLNPAQVFDLISTGPSLGLRLFRHFEMFRILVCSGDGSVGWVLSEIDRFNMHKQCQVAVMPLGTGNDLARVLGWGSSCDDDTHLPQILERYESASTKMLDRWSIMVFEKAIPVPKTPKMSISTEQEAMLTGMVTSANHHLRFIVETNDTQTLISSTRNLCDTVDDLVCRISEHHKDDEQLAVKCDILRQKLNMLLDALQEEEIGAHSGDDLIATIRSLIARSIPVTPGSNAYLLNPNISIEKTEKDQINSKERRNSRSLRSSEKEALQCRANSVKRAIYNVVEHSEPGRPKRYQRKLSITPFEALKLPTNASGESTPCTSPLPIIPPINIISPTMETSRLTCISPLPDTRRDSVDENFFNSINLPAPRQFADSRRSSGVPEVIQEIEEGANGETVYRRSRMSLTGGANIDDAGNRLSPCSDGGENTPTERKLDFLRVPIHTGEPIVDPLCDYRPHEVFERNYYMTREMDKDKEKDKEKDKPVEIDIEKDTCVEKEGSMPEEKLVHTCNLQVPGVVVTPNPQNVYSSASITIIDTDAQTTTEQSSSDDLGGEASDVLSAISNEECSVASEIFDKQDAGQTVGDIIQNMDASNFTHIDSPETSDETEAMPGESIMDDISSVLGHDITYALQDNTLTDDTTTLCSEHVGPPKPPRKKSLSALSRTQAHPRRRNSSPPRIARLARMDSDDNPQQFGFENIVFEIDNRCDDQKMREPPRYCSLAQFVEGNDIARQSFKQLMLEQHRGGDNDSEYPEHQQTPTNKGANLLITTSEDELSTQTAIKIEIQDIDATVRNLNSSMKPNTILTTSTSPTKKSGHGQDISVVVRPPTPLRGDSTKPTVSLLPVSSGGAMAVSMTCSGMLGVRAMNASEIRRHSSHAPGLAVREFDKDKDRRHSGFNPNQLTLDPEHARFLSSSPAASRRISCGSLFKKKNKQIATKRSYGLFSVRFFVVAEPDFRLATLALIRPLIPLNEALPNLQTLKGSKSSLFMGSTLFGFDHLASAEKDKEEKGGKDKEKTPTEETNRKLPIINPLVRLPNWPLANGGGFISKCLLANADTLCAAVSPLMDPDETLLAGYHEKCVMNNYFGIGIDAKISLDFHNKREEHPEKCRSRARNYMWYGVLGSKQLLQKTCKNLEQRVQLECDGQRIPLPELQGIVILNIPSFMGGTNFWGSSTKKDDIFLPPSFDDRVLEVVAVFGSVQMAASRLINLQHHRIAQCQSVQINILGDEEIPIQVDGEAWLQPPGMIRILHKNRVQMLCRNRSLELSLKSWQEKQRQHSISIQRDASSTASEHANSTDEVISERECYVLLNFIEAVSSLVKWVKFLIISHPALQHDLYEVACRASEALESIHPQGKLLEGPSLRTKLVEVIDSSRQLYDDACTLLRDRGHSLILREDLETKLSAALANMEMELKKCSVQKCIDGKLRAYFNVLAPNEESDGRRKSRPFWVRLRSGSTAGQQAFKPPLTNTREAPNNWSVNEVVTWLETMQLSEYVDSFLKNDIRGKELLTLGRRDLKDLGVVKVGHVKRILQAIKDLSEN.

A compositionally biased stretch (basic and acidic residues) spans 1-10; sequence MSHLKLDTLH. The segment at 1–37 is disordered; the sequence is MSHLKLDTLHVQRSPRGSRRSSRSSGRSSACSSGSIS. A compositionally biased stretch (low complexity) spans 23 to 37; the sequence is RSSGRSSACSSGSIS. A PH domain is found at 82–175; the sequence is AIIKEGFLLK…WLGSLKTATA (94 aa). Phorbol-ester/DAG-type zinc fingers lie at residues 195 to 245 and 268 to 319; these read HHHW…IANC and PHQW…AVAC. Residues 350–486 enclose the DAGKc domain; that stretch reads GNFSPLLVFV…DRWSIMVFEK (137 aa). Disordered regions lie at residues 621–642, 783–805, 1016–1053, 1116–1135, and 1175–1216; these read EKDQINSKERRNSRSLRSSEKE, GANIDDAGNRLSPCSDGGENTPT, TLCSEHVGPPKPPRKKSLSALSRTQAHPRRRNSSPPRI, QHRGGDNDSEYPEHQQTPTN, and PNTI…TVSL. Residues 1175 to 1187 show a composition bias toward polar residues; sequence PNTILTTSTSPTK. The region spanning 1851 to 1914 is the SAM domain; it reads WSVNEVVTWL…LQAIKDLSEN (64 aa).

This sequence belongs to the eukaryotic diacylglycerol kinase family.

The protein localises to the cytoplasm. The catalysed reaction is a 1,2-diacyl-sn-glycerol + ATP = a 1,2-diacyl-sn-glycero-3-phosphate + ADP + H(+). Phosphorylates diacylglycerol (DAG) to generate phosphatidic acid (PA). This is Diacylglycerol kinase eta from Drosophila sechellia (Fruit fly).